The sequence spans 438 residues: MDYQTIPSQGLSGEICVPGDKSISHRAVLLVAIAEGQTQVDGFLMGADNLAMVSALQQMGASIQVIEDENILVVEGVGMTGLQAPPEALDCGNSGTAIRLLSGLLAGQPFNTVLTGDSSLQRRPMKRIIDPLTLMGAKIDSTGNVPPLKIYGNPRLTGIHYQLPMASAQVKSCLLLAGLYARGKTCITEPAPSRDHTERLLKHFHYTLQKDKQSICVSGGGKLKANDISIPGDISSAAFFIVAATITPGSAIRLCRVGVNPTRLGVINLLKMMGADIEVTHYTEKNEEPTADITVRHARLKGIDIPPDQVLLTIDEFPVLLIAAAVAQGKTVLRDAAELRVKETDRIAAMVDGLQKLGIAAESLPDGVIIQGGTLEGGEVNSYDDHRIAMAFAVAGTLAKGPVRIRNCDNVKTSFPNFVELANEVGMNVKGVRGRGGF.

Residues lysine 21, serine 22, and arginine 26 each contribute to the 3-phosphoshikimate site. Residue lysine 21 coordinates phosphoenolpyruvate. Positions 95 and 123 each coordinate phosphoenolpyruvate. 3-phosphoshikimate contacts are provided by serine 167, glutamine 169, aspartate 315, and lysine 342. Glutamine 169 contacts phosphoenolpyruvate. Residue aspartate 315 is the Proton acceptor of the active site. 2 residues coordinate phosphoenolpyruvate: arginine 346 and arginine 387.

The protein belongs to the EPSP synthase family. Monomer.

It localises to the cytoplasm. The catalysed reaction is 3-phosphoshikimate + phosphoenolpyruvate = 5-O-(1-carboxyvinyl)-3-phosphoshikimate + phosphate. It participates in metabolic intermediate biosynthesis; chorismate biosynthesis; chorismate from D-erythrose 4-phosphate and phosphoenolpyruvate: step 6/7. Its function is as follows. Catalyzes the transfer of the enolpyruvyl moiety of phosphoenolpyruvate (PEP) to the 5-hydroxyl of shikimate-3-phosphate (S3P) to produce enolpyruvyl shikimate-3-phosphate and inorganic phosphate. The chain is 3-phosphoshikimate 1-carboxyvinyltransferase from Coxiella burnetii (strain RSA 331 / Henzerling II).